The sequence spans 643 residues: Threonine--tRNA ligase (643 aa).

Positions M1–T61 constitute a TGS domain. The catalytic stretch occupies residues D243–P534. Zn(2+)-binding residues include C334, H385, and H511.

It belongs to the class-II aminoacyl-tRNA synthetase family. In terms of assembly, homodimer. Zn(2+) is required as a cofactor.

It is found in the cytoplasm. It carries out the reaction tRNA(Thr) + L-threonine + ATP = L-threonyl-tRNA(Thr) + AMP + diphosphate + H(+). In terms of biological role, catalyzes the attachment of threonine to tRNA(Thr) in a two-step reaction: L-threonine is first activated by ATP to form Thr-AMP and then transferred to the acceptor end of tRNA(Thr). Also edits incorrectly charged L-seryl-tRNA(Thr). The polypeptide is Threonine--tRNA ligase (Mannheimia succiniciproducens (strain KCTC 0769BP / MBEL55E)).